Consider the following 175-residue polypeptide: MESRYLQKCLGTCLTQGLTEVARVRPLDPIEYLAFWLYKHKENMNMEQMRQREMITLEHERELAMMEQEMLERLKAEELLFQQQLAFQLELEMQQKEKQKSEDFETGQEKSFKSMMSMESTARGEEQEPMQAEELVMDSGKTLAEISDRYGAPNLSRVEELDEPMLSDNGVSAPP.

Residues 94–112 (QQKEKQKSEDFETGQEKSF) are compositionally biased toward basic and acidic residues. 2 disordered regions span residues 94–134 (QQKE…QAEE) and 152–175 (APNLSRVEELDEPMLSDNGVSAPP).

This sequence belongs to the dpy-30 family. Component of the axonemal radial spoke complex 1 (RS1), at least composed of spoke head proteins RSPH1, RSPH3, RSPH9 and the cilia-specific component RSPH4A or sperm-specific component RSPH6A, spoke stalk proteins RSPH14, DNAJB13, DYDC1, ROPN1L and NME5, and the anchor protein IQUB. Interacts with SH3GL3.

It localises to the cytoplasm. It is found in the cytoskeleton. The protein resides in the flagellum axoneme. In terms of biological role, functions as part of axonemal radial spoke complexes that play an important part in the motility of sperm and cilia. Plays a crucial role during acrosome biogenesis. The protein is DPY30 domain-containing protein 1 (Dydc1) of Mus musculus (Mouse).